Reading from the N-terminus, the 426-residue chain is Serine--tRNA ligase (426 aa).

235-237 lines the L-serine pocket; the sequence is TAE. ATP is bound at residue 266–268; sequence RRE. E289 provides a ligand contact to L-serine. 353–356 is a binding site for ATP; the sequence is EISS. S389 is an L-serine binding site.

This sequence belongs to the class-II aminoacyl-tRNA synthetase family. Type-1 seryl-tRNA synthetase subfamily. In terms of assembly, homodimer. The tRNA molecule binds across the dimer.

The protein resides in the cytoplasm. It catalyses the reaction tRNA(Ser) + L-serine + ATP = L-seryl-tRNA(Ser) + AMP + diphosphate + H(+). It carries out the reaction tRNA(Sec) + L-serine + ATP = L-seryl-tRNA(Sec) + AMP + diphosphate + H(+). It functions in the pathway aminoacyl-tRNA biosynthesis; selenocysteinyl-tRNA(Sec) biosynthesis; L-seryl-tRNA(Sec) from L-serine and tRNA(Sec): step 1/1. Functionally, catalyzes the attachment of serine to tRNA(Ser). Is also able to aminoacylate tRNA(Sec) with serine, to form the misacylated tRNA L-seryl-tRNA(Sec), which will be further converted into selenocysteinyl-tRNA(Sec). The chain is Serine--tRNA ligase from Nostoc sp. (strain PCC 7120 / SAG 25.82 / UTEX 2576).